The sequence spans 685 residues: Protein SPT2 homolog (685 aa).

The interval 1–570 is important for interaction with DNA; that stretch reads MDFREILMIA…PPLSGYRAAQ (570 aa). Residue Lys37 forms a Glycyl lysine isopeptide (Lys-Gly) (interchain with G-Cter in SUMO2) linkage. The stretch at 45–81 forms a coiled coil; it reads QAFLKRKEEELRRKALEEKRRKEELVKKRIELKHDKK. Positions 79–168 are disordered; that stretch reads DKKARAMAKR…PLKSAPPPMN (90 aa). Basic and acidic residues predominate over residues 101 to 111; the sequence is IEEKSKKRQAT. The stretch at 123–148 forms a coiled coil; that stretch reads YEMEEENEFLEYNHAESEQEYEEEQE. Residue Lys187 forms a Glycyl lysine isopeptide (Lys-Gly) (interchain with G-Cter in SUMO2) linkage. Basic and acidic residues-rich tracts occupy residues 188-209 and 260-275; these read VVKK…EFLE and HAEK…EKHL. Disordered stretches follow at residues 188-615 and 644-685; these read VVKK…QEEI and SWKE…LKRR. A Phosphoserine modification is found at Ser278. 3 stretches are compositionally biased toward low complexity: residues 317 to 330, 365 to 385, and 402 to 415; these read SSTS…TSAS, SPGV…PSTG, and GSSS…ISGS. Polar residues predominate over residues 416–431; the sequence is KKPTNDSNPSRRTVSG. Positions 435–501 are enriched in low complexity; that stretch reads PGQPASSSGG…PGRSISGSIP (67 aa). Residue Ser471 is modified to Phosphoserine. The segment covering 519–529 has biased composition (polar residues); sequence GPGQTVSSSGP. Positions 542-553 are enriched in low complexity; sequence ISSKNIISRSSN. The important for interaction with histones stretch occupies residues 571-685; sequence GPQRLPFPTG…RRRAKKLKRR (115 aa). Lys582 is modified (N6-acetyllysine). The segment covering 587 to 613 has biased composition (acidic residues); the sequence is YEEEDDDDDEYDSEMEDFIEDEGEPQE. Position 599 is a phosphoserine (Ser599). Basic and acidic residues-rich tracts occupy residues 644 to 655 and 666 to 676; these read SWKEQQKEEAKS and EMRREEEEMQR. Residues 645–685 are a coiled coil; that stretch reads WKEQQKEEAKSLRLGMQEDLEEMRREEEEMQRRRAKKLKRR.

It belongs to the SPT2 family. Interacts with histones. Interacts with a heterotetrameric complex formed by histone H3 and H4, especially when the histone tetramer is not bound to DNA. Interacts with histone H3.3.

It is found in the nucleus. The protein localises to the nucleolus. In terms of biological role, histone chaperone that stabilizes pre-existing histone tetramers and regulates replication-independent histone exchange on chromatin. Required for normal chromatin refolding in the coding region of transcribed genes, and for the suppression of spurious transcription. Binds DNA and histones and promotes nucleosome assembly (in vitro). Facilitates formation of tetrameric histone complexes containing histone H3 and H4. Modulates RNA polymerase 1-mediated transcription. Binds DNA, with a preference for branched DNA species, such as Y-form DNA and Holliday junction DNA. The polypeptide is Protein SPT2 homolog (SPTY2D1) (Homo sapiens (Human)).